Reading from the N-terminus, the 161-residue chain is Cytochrome c-type biogenesis protein CcmE (161 aa).

Residues 1-8 (MNPRRKKR) are Cytoplasmic-facing. The chain crosses the membrane as a helical; Signal-anchor for type II membrane protein span at residues 9 to 29 (LGLILALFVGISATVGLMLYA). Residues 30-161 (LNQNMDLFYT…TEQQKQGTGQ (132 aa)) lie on the Periplasmic side of the membrane. Heme contacts are provided by H129 and Y133. Residues 142–161 (MKKTHEPLQYTEQQKQGTGQ) form a disordered region. Residues 151–161 (YTEQQKQGTGQ) show a composition bias toward polar residues.

This sequence belongs to the CcmE/CycJ family.

The protein localises to the cell inner membrane. Its function is as follows. Heme chaperone required for the biogenesis of c-type cytochromes. Transiently binds heme delivered by CcmC and transfers the heme to apo-cytochromes in a process facilitated by CcmF and CcmH. The chain is Cytochrome c-type biogenesis protein CcmE from Aliivibrio fischeri (strain ATCC 700601 / ES114) (Vibrio fischeri).